A 71-amino-acid chain; its full sequence is Pro-glucagon (71 aa).

Belongs to the glucagon family.

Its subcellular location is the secreted. Plays a key role in glucose metabolism and homeostasis. Regulates blood glucose by increasing gluconeogenesis and decreasing glycolysis. The polypeptide is Pro-glucagon (gcg) (Ictalurus punctatus (Channel catfish)).